We begin with the raw amino-acid sequence, 440 residues long: Kinetochore protein NUF2 homolog (440 aa).

Coiled-coil stretches lie at residues 142–239 and 299–386; these read LGLL…LRSQ and INEQ…RQTN.

The protein belongs to the NUF2 family. Component of the NDC80 complex, which consists of NDC80, NUF2, SPC24 and SPC25.

The protein localises to the chromosome. It localises to the centromere. In terms of biological role, acts as a component of the essential kinetochore-associated NDC80 complex, which is required for chromosome segregation and spindle checkpoint activity to ensure proper cell division. In Arabidopsis thaliana (Mouse-ear cress), this protein is Kinetochore protein NUF2 homolog.